Here is an 801-residue protein sequence, read N- to C-terminus: LPS-assembly protein LptD (801 aa).

The first 23 residues, 1–23 (MARLFSLKPLVLALGFCFGTHCA), serve as a signal peptide directing secretion.

Belongs to the LptD family. Component of the lipopolysaccharide transport and assembly complex. Interacts with LptE and LptA.

The protein resides in the cell outer membrane. Functionally, together with LptE, is involved in the assembly of lipopolysaccharide (LPS) at the surface of the outer membrane. The chain is LPS-assembly protein LptD from Neisseria gonorrhoeae (strain ATCC 700825 / FA 1090).